Here is a 117-residue protein sequence, read N- to C-terminus: MTESFTRRERLRLRRDFLTIFKEGESLQNEYFVVLFKKNGLDYSRLGIVVKRKFGKATRRNKLKRWVREIFRKSKGVIPKGFDIVVIPRKKLSEEFEQVDFWAVHEKLLNLLKRIEG.

It belongs to the RnpA family. Consists of a catalytic RNA component (M1 or rnpB) and a protein subunit.

The catalysed reaction is Endonucleolytic cleavage of RNA, removing 5'-extranucleotides from tRNA precursor.. RNaseP catalyzes the removal of the 5'-leader sequence from pre-tRNA to produce the mature 5'-terminus. It can also cleave other RNA substrates such as 4.5S RNA. The protein component plays an auxiliary but essential role in vivo by binding to the 5'-leader sequence and broadening the substrate specificity of the ribozyme. In Thermotoga petrophila (strain ATCC BAA-488 / DSM 13995 / JCM 10881 / RKU-1), this protein is Ribonuclease P protein component.